Reading from the N-terminus, the 271-residue chain is Intercellular adhesion molecule 4 (271 aa).

An N-terminal signal peptide occupies residues 1-22; it reads MGSLFPLSLLFFLAAAYPGVGS. Topologically, residues 23–240 are extracellular; it reads ALGRRTKRAQ…MLAWSPAPTA (218 aa). Ig-like C2-type domains follow at residues 62 to 124 and 146 to 217; these read GKSV…TRWA and GRKY…LNLD. 4 N-linked (GlcNAc...) asparagine glycosylation sites follow: Asn-68, Asn-78, Asn-190, and Asn-223. 4 cysteine pairs are disulfide-bonded: Cys-69-Cys-113, Cys-69-Cys-117, Cys-73-Cys-117, and Cys-153-Cys-210. A helical transmembrane segment spans residues 241-261; the sequence is LASGSIAALVGILLTVGAAYL. The Cytoplasmic portion of the chain corresponds to 262 to 271; the sequence is CKCLAMKSQA.

This sequence belongs to the immunoglobulin superfamily. ICAM family. Post-translationally, N- and O-glycosylated. In terms of tissue distribution, erythrocytes.

The protein localises to the cell membrane. The protein resides in the secreted. ICAM proteins are ligands for the leukocyte adhesion protein LFA-1 (integrin alpha-L/beta-2). ICAM4 is also a ligand for alpha-4/beta-1 and alpha-V integrins. The sequence is that of Intercellular adhesion molecule 4 (ICAM4) from Homo sapiens (Human).